Consider the following 492-residue polypeptide: N-succinylglutamate 5-semialdehyde dehydrogenase (492 aa).

Position 220–225 (220–225 (GSANTG)) interacts with NAD(+). Active-site residues include glutamate 243 and cysteine 277.

The protein belongs to the aldehyde dehydrogenase family. AstD subfamily.

The enzyme catalyses N-succinyl-L-glutamate 5-semialdehyde + NAD(+) + H2O = N-succinyl-L-glutamate + NADH + 2 H(+). Its pathway is amino-acid degradation; L-arginine degradation via AST pathway; L-glutamate and succinate from L-arginine: step 4/5. Catalyzes the NAD-dependent reduction of succinylglutamate semialdehyde into succinylglutamate. This is N-succinylglutamate 5-semialdehyde dehydrogenase from Escherichia coli O127:H6 (strain E2348/69 / EPEC).